Reading from the N-terminus, the 235-residue chain is NAD(P)H-quinone oxidoreductase subunit K, chloroplastic (235 aa).

4 residues coordinate [4Fe-4S] cluster: Cys-43, Cys-44, Cys-108, and Cys-139.

The protein belongs to the complex I 20 kDa subunit family. NDH is composed of at least 16 different subunits, 5 of which are encoded in the nucleus. Requires [4Fe-4S] cluster as cofactor.

It localises to the plastid. The protein resides in the chloroplast thylakoid membrane. The enzyme catalyses a plastoquinone + NADH + (n+1) H(+)(in) = a plastoquinol + NAD(+) + n H(+)(out). It carries out the reaction a plastoquinone + NADPH + (n+1) H(+)(in) = a plastoquinol + NADP(+) + n H(+)(out). Its function is as follows. NDH shuttles electrons from NAD(P)H:plastoquinone, via FMN and iron-sulfur (Fe-S) centers, to quinones in the photosynthetic chain and possibly in a chloroplast respiratory chain. The immediate electron acceptor for the enzyme in this species is believed to be plastoquinone. Couples the redox reaction to proton translocation, and thus conserves the redox energy in a proton gradient. The protein is NAD(P)H-quinone oxidoreductase subunit K, chloroplastic of Ipomoea purpurea (Common morning glory).